A 292-amino-acid chain; its full sequence is 4-hydroxy-tetrahydrodipicolinate synthase (292 aa).

Thr45 is a pyruvate binding site. Tyr133 acts as the Proton donor/acceptor in catalysis. The Schiff-base intermediate with substrate role is filled by Lys161. Ile203 is a binding site for pyruvate.

It belongs to the DapA family. As to quaternary structure, homotetramer; dimer of dimers.

It is found in the cytoplasm. It catalyses the reaction L-aspartate 4-semialdehyde + pyruvate = (2S,4S)-4-hydroxy-2,3,4,5-tetrahydrodipicolinate + H2O + H(+). It functions in the pathway amino-acid biosynthesis; L-lysine biosynthesis via DAP pathway; (S)-tetrahydrodipicolinate from L-aspartate: step 3/4. Catalyzes the condensation of (S)-aspartate-beta-semialdehyde [(S)-ASA] and pyruvate to 4-hydroxy-tetrahydrodipicolinate (HTPA). This chain is 4-hydroxy-tetrahydrodipicolinate synthase, found in Herminiimonas arsenicoxydans.